The primary structure comprises 141 residues: Small ribosomal subunit protein uS8c (141 aa).

It belongs to the universal ribosomal protein uS8 family. As to quaternary structure, part of the 30S ribosomal subunit.

Its subcellular location is the plastid. The protein resides in the chloroplast. In terms of biological role, one of the primary rRNA binding proteins, it binds directly to 16S rRNA central domain where it helps coordinate assembly of the platform of the 30S subunit. The polypeptide is Small ribosomal subunit protein uS8c (rps8) (Chlamydomonas reinhardtii (Chlamydomonas smithii)).